The chain runs to 349 residues: 4-hydroxythreonine-4-phosphate dehydrogenase (349 aa).

Substrate contacts are provided by H141 and T142. Residues H176, H221, and H276 each contribute to the a divalent metal cation site. Substrate-binding residues include K284, N293, and R302.

Belongs to the PdxA family. In terms of assembly, homodimer. The cofactor is Zn(2+). It depends on Mg(2+) as a cofactor. Co(2+) is required as a cofactor.

Its subcellular location is the cytoplasm. The catalysed reaction is 4-(phosphooxy)-L-threonine + NAD(+) = 3-amino-2-oxopropyl phosphate + CO2 + NADH. It participates in cofactor biosynthesis; pyridoxine 5'-phosphate biosynthesis; pyridoxine 5'-phosphate from D-erythrose 4-phosphate: step 4/5. In terms of biological role, catalyzes the NAD(P)-dependent oxidation of 4-(phosphooxy)-L-threonine (HTP) into 2-amino-3-oxo-4-(phosphooxy)butyric acid which spontaneously decarboxylates to form 3-amino-2-oxopropyl phosphate (AHAP). In Methylorubrum extorquens (strain PA1) (Methylobacterium extorquens), this protein is 4-hydroxythreonine-4-phosphate dehydrogenase.